The sequence spans 132 residues: UPF0047 protein YugU (132 aa).

Belongs to the UPF0047 family.

This Bacillus subtilis (strain 168) protein is UPF0047 protein YugU (yugU).